The following is a 231-amino-acid chain: Venom allergen 3 homolog (231 aa).

Positions 1 to 21 (MSSCMLFFTVIIAGVFMGTIA) are cleaved as a signal peptide. 3 cysteine pairs are disulfide-bonded: C25-C40, C30-C124, and C51-C117. One can recognise an SCP domain in the interval 68 to 215 (VTLHNQLRRK…WNQQYLVCNY (148 aa)). An N-linked (GlcNAc...) asparagine glycan is attached at N145. A disulfide bridge connects residues C196 and C213.

Belongs to the CRISP family. Expressed by the venom gland.

It is found in the secreted. This Dinoponera quadriceps (South American ant) protein is Venom allergen 3 homolog.